The chain runs to 500 residues: Flt3-interacting zinc finger protein 1 (500 aa).

An N-acetylmethionine modification is found at methionine 1. Residues 1–24 (MEDSSLPVVPAPIAAPGPAPSATA) form a disordered region. Pro residues predominate over residues 9 to 19 (VPAPIAAPGPA). 6 C2H2-type zinc fingers span residues 29-51 (FHCS…FARH), 57-79 (HACP…LRSH), 85-107 (YRCS…QVVH), 113-136 (YCCL…KRQH), 204-226 (FACG…WAAH), and 232-254 (FKCP…KLTH). Disordered regions lie at residues 255–284 (DLQG…ASEV) and 306–328 (KLEA…AAAE). The segment covering 256–267 (LQGSNAPPTQVW) has biased composition (polar residues). C2H2-type zinc fingers lie at residues 336 to 357 (YQCD…LEAH), 363 to 386 (YGCG…RASH), 418 to 440 (FGCS…VLVH), 446 to 468 (FPCL…RLLH), and 474 to 496 (FPCH…LKLH). Residues 383 to 415 (RASHGEGSGEAAPDGEGNQAAGGPGPGSSSRSK) form a disordered region.

As to quaternary structure, interacts with FLT3 cytoplasmic catalytic domain, following receptor stimulation, in a kinase-independent manner. Does not interact with other structurally related receptor tyrosine kinases, including KIT, CSF1R and PDGFR. Interacts with NRL. In terms of tissue distribution, widely expressed. In the retina, highest expression in the ganglion cell layer.

It localises to the cytoplasm. The protein resides in the nucleus. Functionally, may be a transcriptional repressor of NRL function in photoreceptors. Does not repress CRX-mediated transactivation. This Mus musculus (Mouse) protein is Flt3-interacting zinc finger protein 1 (Fiz1).